Consider the following 275-residue polypeptide: Bis(5'-nucleosyl)-tetraphosphatase, symmetrical (275 aa).

Belongs to the Ap4A hydrolase family.

The catalysed reaction is P(1),P(4)-bis(5'-adenosyl) tetraphosphate + H2O = 2 ADP + 2 H(+). Functionally, hydrolyzes diadenosine 5',5'''-P1,P4-tetraphosphate to yield ADP. This Haemophilus influenzae (strain ATCC 51907 / DSM 11121 / KW20 / Rd) protein is Bis(5'-nucleosyl)-tetraphosphatase, symmetrical (apaH).